Reading from the N-terminus, the 416-residue chain is Ribulose bisphosphate carboxylase large chain (416 aa).

Lys5 carries the N6,N6,N6-trimethyllysine modification. Substrate contacts are provided by Asn114 and Thr164. The Proton acceptor role is filled by Lys166. Lys168 is a binding site for substrate. Lys192, Asp194, and Glu195 together coordinate Mg(2+). An N6-carboxylysine modification is found at Lys192. His285 serves as the catalytic Proton acceptor. Substrate contacts are provided by Arg286, His318, and Ser370.

The protein belongs to the RuBisCO large chain family. Type I subfamily. Heterohexadecamer of 8 large chains and 8 small chains; disulfide-linked. The disulfide link is formed within the large subunit homodimers. Mg(2+) serves as cofactor. The disulfide bond which can form in the large chain dimeric partners within the hexadecamer appears to be associated with oxidative stress and protein turnover.

The protein resides in the plastid. It localises to the chloroplast. It carries out the reaction 2 (2R)-3-phosphoglycerate + 2 H(+) = D-ribulose 1,5-bisphosphate + CO2 + H2O. The enzyme catalyses D-ribulose 1,5-bisphosphate + O2 = 2-phosphoglycolate + (2R)-3-phosphoglycerate + 2 H(+). Its function is as follows. RuBisCO catalyzes two reactions: the carboxylation of D-ribulose 1,5-bisphosphate, the primary event in carbon dioxide fixation, as well as the oxidative fragmentation of the pentose substrate in the photorespiration process. Both reactions occur simultaneously and in competition at the same active site. The protein is Ribulose bisphosphate carboxylase large chain (rbcL) of Spigelia marilandica (Woodland pinkroot).